A 539-amino-acid polypeptide reads, in one-letter code: MKFDPESIKKAAKEDFDSAWTSGKDLIKKTGLNQQYPHTSFHFGKAHPVYDTIAKLREAYLRMGFDEMMNPLIVDEKEVYKQFGHEALAVLDRCYYLAGLPRPNVGISDQRIAKIKEMLGGIDDEGIETIRKVLHSYKKGEVEGDDLVPEIALKLNVSDALVVEMIDKVFPEFKELTPQATTKTLRSHMTSGWFISLSGILERSRPPFHLFSIDRSFRREQQEDASRLMTYYSASCVIMDEDVTVDHGKAVAQGLLAQFGFEKFMFRPDEKRSKYYVPDTQIEVFAYHPKLVGSNTKYSDGWIEIATFGIYSPTALAEYNIPCPVMNLGLGVERLAMILHDSTDLRGMTYPQLPQYAEWELKDNELARMIFVDKLPETPEGQEILEGIVMQCDMHGSEPSPCEFVAWEGILKGKKVKVSVIEPEEDTKLCGPAAYNEVLVHENDVLGLPNNKKWKKAFENHSARTGVRFIEAFAAQAAKEIEEAVEKGEKECETRVRIVKVPSEINIKLDPLAQRYITGKKQKIDIRGPVFTTVRAEIE.

Substrate contacts are provided by residues 188-190 (HMT), 233-235 (SAS), 275-276 (YY), and Asn-327.

The protein belongs to the class-II aminoacyl-tRNA synthetase family. O-phosphoseryl-tRNA(Cys) synthetase subfamily. Homotetramer. Interacts with SepCysS.

It carries out the reaction tRNA(Cys) + O-phospho-L-serine + ATP = O-phospho-L-seryl-tRNA(Cys) + AMP + diphosphate. Its function is as follows. Catalyzes the attachment of O-phosphoserine (Sep) to tRNA(Cys). The protein is O-phosphoserine--tRNA(Cys) ligase of Methanococcoides burtonii (strain DSM 6242 / NBRC 107633 / OCM 468 / ACE-M).